A 335-amino-acid chain; its full sequence is Vitamin B12 import system permease protein BtuC (335 aa).

A run of 9 helical transmembrane segments spans residues phenylalanine 21–tryptophan 43, phenylalanine 63–valine 82, glycine 95–phenylalanine 114, proline 119–phenylalanine 141, leucine 153–threonine 175, tryptophan 195–serine 212, phenylalanine 244–valine 266, threonine 281–leucine 303, and valine 310–leucine 329.

It belongs to the binding-protein-dependent transport system permease family. FecCD subfamily. The complex is composed of two ATP-binding proteins (BtuD), two transmembrane proteins (BtuC) and a solute-binding protein (BtuF).

Its subcellular location is the cell inner membrane. Functionally, part of the ABC transporter complex BtuCDF involved in vitamin B12 import. Involved in the translocation of the substrate across the membrane. In Photorhabdus laumondii subsp. laumondii (strain DSM 15139 / CIP 105565 / TT01) (Photorhabdus luminescens subsp. laumondii), this protein is Vitamin B12 import system permease protein BtuC.